We begin with the raw amino-acid sequence, 380 residues long: Chaperone protein DnaJ (380 aa).

Positions 5-70 (DYYEVLGVSK…QKRQTYDQYG (66 aa)) constitute a J domain. The CR-type zinc finger occupies 136-214 (GKEVEIKIPT…CHGQGRVEKT (79 aa)). 8 residues coordinate Zn(2+): cysteine 149, cysteine 152, cysteine 166, cysteine 169, cysteine 188, cysteine 191, cysteine 202, and cysteine 205. CXXCXGXG motif repeat units follow at residues 149-156 (CDPCDGSG), 166-173 (CTTCHGAG), 188-195 (CPTCQGQG), and 202-209 (CDSCHGQG).

It belongs to the DnaJ family. Homodimer. Requires Zn(2+) as cofactor.

The protein resides in the cytoplasm. Its function is as follows. Participates actively in the response to hyperosmotic and heat shock by preventing the aggregation of stress-denatured proteins and by disaggregating proteins, also in an autonomous, DnaK-independent fashion. Unfolded proteins bind initially to DnaJ; upon interaction with the DnaJ-bound protein, DnaK hydrolyzes its bound ATP, resulting in the formation of a stable complex. GrpE releases ADP from DnaK; ATP binding to DnaK triggers the release of the substrate protein, thus completing the reaction cycle. Several rounds of ATP-dependent interactions between DnaJ, DnaK and GrpE are required for fully efficient folding. Also involved, together with DnaK and GrpE, in the DNA replication of plasmids through activation of initiation proteins. In Pseudoalteromonas translucida (strain TAC 125), this protein is Chaperone protein DnaJ.